The primary structure comprises 1726 residues: Transcription elongation factor SPT6 (1726 aa).

Acidic residues-rich tracts occupy residues 1–18 (MSDF…EFEE), 31–45 (EEDE…EDQD), and 55–79 (DDDD…SDSG). Disordered stretches follow at residues 1–196 (MSDF…KGKK), 219–248 (AEFD…KKQT), and 482–512 (EVSE…QASR). Phosphoserine is present on S90. Residues 93 to 104 (DYLDDDDLDLIE) are compositionally biased toward acidic residues. Residues 110-120 (KVKRRKKKYSR) show a composition bias toward basic residues. 4 stretches are compositionally biased toward acidic residues: residues 146 to 157 (GDGEGEVEDGEA), 166 to 186 (DEEE…DDDG), 219 to 240 (AEFD…DDES), and 484 to 501 (SEED…EEEE). A compositionally biased stretch (basic and acidic residues) spans 502 to 512 (QKGPDLKQASR). A coiled-coil region spans residues 806 to 865 (LKRRNAWREDEREKKQQDVENLKKFLLSKKPHVVAVSGENRDAHMVMEDIKRTISELEQN). The region spanning 1204–1273 (WNHFDSGSCP…EKFNVDLTCR (70 aa)) is the S1 motif domain. The SH2 domain maps to 1316–1426 (YIKRVIAHPS…LLGHKYFHEC (111 aa)). T1522 is subject to Phosphothreonine. Phosphoserine is present on S1525. The segment covering 1611–1627 (LMTPSYSYTTPGQQQAM) has biased composition (polar residues). The segment at 1611-1726 (LMTPSYSYTT…ATPLLDEMDR (116 aa)) is disordered. Composition is skewed to low complexity over residues 1628–1640 (TTPQ…PQSS) and 1647–1656 (SSSTPSSSSS). Over residues 1657–1669 (RVRTPQPKASSHT) the composition is skewed to polar residues.

It belongs to the SPT6 family.

Its subcellular location is the nucleus. Histone H3-H4 chaperone that plays a role in maintenance of chromatin structure during RNA polymerase II transcription elongation. Promotes the activation of the myogenic gene program by entailing erasure of the repressive H3K27me3 epigenetic mark through stabilization of the chromatin interaction of the H3K27 demethylase KDM6A. Plays an important role during early patterning and somitogenesis of the embryo. This Danio rerio (Zebrafish) protein is Transcription elongation factor SPT6 (supt6h).